A 649-amino-acid polypeptide reads, in one-letter code: Forkhead box protein O1 (649 aa).

2 disordered regions span residues 1–62 (MAEA…ASAS) and 112–151 (VHSAPPQPPPTGPLSQPPPVPPAAAGPLAGQPRKTSSSRR). The residue at position 24 (Thr-24) is a Phosphothreonine; by PKB/AKT1 or PKB/AKT2 and SGK1. Residues 33–62 (NQSNSTTSSPAPSGSTAANPDATASLASAS) are compositionally biased toward low complexity. The segment covering 116–135 (PPQPPPTGPLSQPPPVPPAA) has biased composition (pro residues). The segment at residues 154-248 (WGNLSYADLI…KSGKSPRRRA (95 aa)) is a DNA-binding region (fork-head). DNA-binding stretches follow at residues 205–212 (NSIRHNLS) and 228–231 (SSWW). A Phosphoserine; by STK4/MST1 modification is found at Ser-206. Residues Ser-212, Ser-228, and Ser-229 each carry the phosphoserine modification. The disordered stretch occupies residues 228–339 (SSWWMLNPEG…DDLGDGDVHS (112 aa)). N6-acetyllysine occurs at positions 239 and 242. Ser-243 carries the post-translational modification Phosphoserine; by CDK1. Arg-245 and Arg-247 each carry omega-N-methylarginine; by PRMT1. Residues 245–247 (RRR) carry the Nuclear localization signal motif. Position 250 is a phosphoserine; by PKB/AKT1 and SGK1 (Ser-250). Lys-256, Lys-259, and Lys-268 each carry N6-acetyllysine. The segment covering 258 to 269 (AKSRGRAAKKKA) has biased composition (basic residues). Positions 277 to 557 (GPGDSPGSQF…RLTPVKTPLQ (281 aa)) are sufficient for interaction with NLK. Ser-281 and Ser-292 each carry phosphoserine. Over residues 303–320 (NWSTFRPRTSSNASTISG) the composition is skewed to polar residues. Ser-313 is modified (phosphoserine; by PKB/AKT1). Position 316 is a phosphoserine; by CK1 and SGK1 (Ser-316). Ser-319 carries the phosphoserine; by CK1 modification. Ser-323 bears the Phosphoserine mark. A Phosphothreonine modification is found at Thr-327. Residues 357–453 (SEISNPENME…GGLNQYNCAP (97 aa)) are required for interaction with RUNX2. The residue at position 417 (Lys-417) is an N6-acetyllysine. Positions 456–460 (LKELL) match the Required for interaction with SIRT1 motif.

As to quaternary structure, interacts with LRPPRC. Interacts with RUNX2; the interaction inhibits RUNX2 transcriptional activity and mediates the IGF1/insulin-dependent BGLAP expression in osteoblasts Interacts with PPP2R1A; the interaction regulates the dephosphorylation of FOXO1 at Thr-24 and Ser-250 leading to its nuclear import. Interacts with NLK. Interacts with SIRT1; the interaction results in the deacetylation of FOXO1 leading to activation of FOXO1-mediated transcription of genes involved in DNA repair and stress resistance. Binds to CDK1. Interacts with the 14-3-3 proteins, YWHAG and YWHAZ; the interactions require insulin-stimulated phosphorylation on Thr-24, promote nuclear exit and loss of transcriptional activity. Interacts with SKP2; the interaction ubiquitinates FOXO1 leading to its proteasomal degradation. The interaction requires the presence of KRIT1. Interacts (via the C-terminal half) with ATF4 (via its DNA binding domain); the interaction occurs in osteoblasts, regulates glucose homeostasis via suppression of beta-cell proliferation and subsequent decrease in insulin production. Interacts with PRMT1; the interaction methylates FOXO1, prevents PKB/AKT1 phosphorylation and retains FOXO1 in the nucleus. Interacts with EP300 and CREBBP; the interactions acetylate FOXO1. Interacts with SIRT2; the interaction is disrupted in response to oxidative stress or serum deprivation, leading to increased level of acetylated FOXO1, which promotes stress-induced autophagy by stimulating E1-like activating enzyme ATG7. Interacts (acetylated form) with ATG7; the interaction is increased in response to oxidative stress or serum deprivation and promotes the autophagic process leading to cell death. Interacts (acetylated form) with PPARG. Interacts with XBP1; this interaction is direct and leads to FOXO1 ubiquitination and degradation via the proteasome pathway. Interacts (via the Fork-head domain) with CEBPA; the interaction increases when FOXO1 is deacetylated. Interacts with WDFY2. Forms a complex with WDFY2 and AKT1. Interacts with CRY1. Interacts with PPIA/CYPA; the interaction promotes FOXO1 dephosphorylation, nuclear accumulation and transcriptional activity. Interacts with TOX4; FOXO1 is required for full induction of TOX4-dependent activity and the interaction is inhibited by insulin. Interacts (when phosphorylated on Ser-250) with STUB1/CHIP. Post-translationally, phosphorylation by NLK promotes nuclear export and inhibits the transcriptional activity. In response to growth factors, phosphorylation on Thr-24, Ser-250 and Ser-313 by PKB/AKT1 promotes nuclear export and inactivation of transactivational activity. Phosphorylation on Thr-24 is required for binding 14-3-3 proteins. Phosphorylation of Ser-250 decreases DNA-binding activity and promotes the phosphorylation of Thr-24 and Ser-313, permitting phosphorylation of Ser-316 and Ser-319, probably by CDK1, leading to nuclear exclusion and loss of function. Stress signals, such as response to oxygen or nitric oxide, attenuate the PKB/AKT1-mediated phosphorylation leading to nuclear retention. Phosphorylation of Ser-323 is independent of IGF1 and leads to reduced function. Dephosphorylated on Thr-24 and Ser-250 by PP2A in beta-cells under oxidative stress leading to nuclear retention. Phosphorylation of Ser-243 by CDK1 disrupts binding of 14-3-3 proteins leading to nuclear accumulation and has no effect on DNA binding nor transcriptional activity. Phosphorylation by STK4/MST1 on Ser-206, upon oxidative stress, inhibits binding to 14-3-3 proteins and nuclear export. PPIA/CYPA promotes its dephosphorylation on Ser-250. In terms of processing, ubiquitinated by SKP2. Ubiquitination leads to proteasomal degradation. Ubiquitinated by STUB1/CHIP; when Ser-250 is phosphorylated. Methylation inhibits AKT1-mediated phosphorylation at Ser-250 and is increased by oxidative stress. Post-translationally, acetylated. Acetylation at Lys-256 and Lys-268 are necessary for autophagic cell death induction. Deacetylated by SIRT2 in response to oxidative stress or serum deprivation, thereby negatively regulating FOXO1-mediated autophagic cell death. Once in the nucleus, acetylated by CREBBP/EP300. Acetylation diminishes the interaction with target DNA and attenuates the transcriptional activity. It increases the phosphorylation at Ser-250. Deacetylation by SIRT1 results in reactivation of the transcriptional activity. Oxidative stress by hydrogen peroxide treatment appears to promote deacetylation and uncoupling of insulin-induced phosphorylation. By contrast, resveratrol acts independently of acetylation. Acetylated at Lys-417, promoting its localization to the nucleus and transcription factor activity. Deacetylation at Lys-417 by SIRT6, promotes its translocation into the cytoplasm, preventing its transcription factor activity. Deacetylation and subsequent inhibition by SIRT6 has different effects depending on cell types: it inhibits gluconeogenesis in hepatocytes, promotes glucose sensing in pancreatic beta-cells and regulates lipid catabolism in brown adipocytes. Expressed in the internal elastic lamina of the carotid artery (at protein level).

Its subcellular location is the cytoplasm. It localises to the nucleus. Its function is as follows. Transcription factor that is the main target of insulin signaling and regulates metabolic homeostasis in response to oxidative stress. Binds to the insulin response element (IRE) with consensus sequence 5'-TT[G/A]TTTTG-3' and the related Daf-16 family binding element (DBE) with consensus sequence 5'-TT[G/A]TTTAC-3'. Activity suppressed by insulin. Main regulator of redox balance and osteoblast numbers and controls bone mass. Orchestrates the endocrine function of the skeleton in regulating glucose metabolism. Also acts as a key regulator of chondrogenic commitment of skeletal progenitor cells in response to lipid availability: when lipids levels are low, translocates to the nucleus and promotes expression of SOX9, which induces chondrogenic commitment and suppresses fatty acid oxidation. Acts synergistically with ATF4 to suppress osteocalcin/BGLAP activity, increasing glucose levels and triggering glucose intolerance and insulin insensitivity. Also suppresses the transcriptional activity of RUNX2, an upstream activator of osteocalcin/BGLAP. Acts as an inhibitor of glucose sensing in pancreatic beta cells by acting as a transcription repressor and suppressing expression of PDX1. In hepatocytes, promotes gluconeogenesis by acting together with PPARGC1A and CEBPA to activate the expression of genes such as IGFBP1, G6PC1 and PCK1. Also promotes gluconeogenesis by directly promoting expression of PPARGC1A and G6PC1. Important regulator of cell death acting downstream of CDK1, PKB/AKT1 and STK4/MST1. Promotes neural cell death. Mediates insulin action on adipose tissue. Regulates the expression of adipogenic genes such as PPARG during preadipocyte differentiation and, adipocyte size and adipose tissue-specific gene expression in response to excessive calorie intake. Regulates the transcriptional activity of GADD45A and repair of nitric oxide-damaged DNA in beta-cells. Required for the autophagic cell death induction in response to starvation or oxidative stress in a transcription-independent manner. Mediates the function of MLIP in cardiomyocytes hypertrophy and cardiac remodeling. Positive regulator of apoptosis in cardiac smooth muscle cells as a result of its transcriptional activation of pro-apoptotic genes. Regulates endothelial cell (EC) viability and apoptosis in a PPIA/CYPA-dependent manner via transcription of CCL2 and BCL2L11 which are involved in EC chemotaxis and apoptosis. The sequence is that of Forkhead box protein O1 (Foxo1) from Rattus norvegicus (Rat).